The chain runs to 548 residues: MALAAAAAAAAAAAGVSQAAVLGFLREHGGQVRNSELLSRFKPLLDAGDPRGRAARRDRFKQFVNNVAVVKELDGVKFVVLRKKPRPPEGPEAPLPSSPGVPAALAQCAAVPAEDNCAPGAPHSPQRSGEPPEDSSAPSELQHTPETLPSEVTQVEAPSGSAPQPGGPEDPALPRSSELARPASVPSGLALTSTESPGPEPAPPTAQVPPQKPCMLPVRCVVPGPAALRIRAEEQGLRRQRSEEPSPRGSPMLLRRLSVEESGLGLHLGPGRSPHLRRLSRAGPRLLSPDTEEMPVAPLPSPAVPLEPTEHEWLVRTASGRWSHQLHGLLLRDRGLAAKRDFMSGFTALHWAAKNGDREMALQLVEVARRGGAPVDVNARSHGGYTPLHLAALHGHEDAAVLLVVRLGAQVHVRDYSGRRAYQYLRPGSSYALRRLLGDPGLRSMMEPDAASGGSGSLVSRHPVQVAATILSSTTSAFLGVLADDLMLQDLARGLKKSSSFSKFLGASPMAPRKKTKIRGGLPSFTEISHRSTPGPLAGLVPSLPPPT.

Residues 1-19 (MALAAAAAAAAAAAGVSQA) form the signal peptide. Residues 114-212 (EDNCAPGAPH…PPTAQVPPQK (99 aa)) form a disordered region. The span at 136–153 (SAPSELQHTPETLPSEVT) shows a compositional bias: polar residues. Pro residues predominate over residues 198–212 (GPEPAPPTAQVPPQK). Ser258 carries the post-translational modification Phosphoserine. ANK repeat units lie at residues 344 to 373 (SGFT…RGGA) and 383 to 413 (GGYT…QVHV). The interval 512 to 548 (PRKKTKIRGGLPSFTEISHRSTPGPLAGLVPSLPPPT) is disordered.

It belongs to the SOWAH family.

The chain is Ankyrin repeat domain-containing protein SOWAHA (Sowaha) from Mus musculus (Mouse).